A 425-amino-acid chain; its full sequence is CinA-like protein (425 aa).

It belongs to the CinA family.

This is CinA-like protein from Shewanella sp. (strain ANA-3).